A 664-amino-acid polypeptide reads, in one-letter code: MFQDNPLLAQLKQQIQENLPKKEGTIKATEKGFGFLEVDSKTSFFIPPAYMKKCMHGDKVIAIIRTENEREVAEPQELVEQMLNRFIGRVKMFKGKLNVVPDHPQLKKMSLKAKTKKGLNPQEFAEGDWVVGHLIRHPLKDDNGFFVEISEKITDADDKIAPWWVTLAENDLPNSEPAGIDDWQIKDDADLERIDMTHIPFVTIDGESTKDMDDALYAKKNDAGDFELTIAIADPTAYITPDDEMDKVARERGFTIYLPGRNIPMLPRDLADELCSLIEGEIRPALCCTVTVSKDGVIGDDIQFFAANIKSHARLAYDNVSDWLETGSCEKWQPSEEIAAIVRDLYEFSQARAEWREKNAVVFPDRPDYRFELSEDNDVVAIHADMRRSANRLVEESMITANICAGKTLQGHFGTGVFNCHAGFKPEKIADVVELVNPEGTLEFTAESIATREGFAALRRWLSKQETTYLDNRIRKFQTYSEVSNQPLPHYAMGLDIYATWTSPIRKYGDMINHRMLKALILNKEPVQKPDDSVGEELALHRKHHKIAERNVADWLYARTLADAPENQTLFTGEIFDINRAGMRIRLLENGAAAFIPGSLIIDNKERIECNGDLGTVSIDKEVVYKLGDVLEVVLADVNQENRSLVAKPTQVFAELPVVEETQN.

The region spanning 193 to 521 (RIDMTHIPFV…INHRMLKALI (329 aa)) is the RNB domain. The region spanning 568-650 (QTLFTGEIFD…ENRSLVAKPT (83 aa)) is the S1 motif domain.

It belongs to the RNR ribonuclease family. RNase II subfamily.

It localises to the cytoplasm. It catalyses the reaction Exonucleolytic cleavage in the 3'- to 5'-direction to yield nucleoside 5'-phosphates.. Functionally, involved in mRNA degradation. Hydrolyzes single-stranded polyribonucleotides processively in the 3' to 5' direction. The chain is Exoribonuclease 2 from Vibrio vulnificus (strain CMCP6).